A 159-amino-acid polypeptide reads, in one-letter code: Phosphopantetheine adenylyltransferase (159 aa).

Substrate is bound at residue T10. Residues 10–11 and H18 each bind ATP; that span reads TF. Residues K42, L74, and R88 each coordinate substrate. Residues 89 to 91, E99, and 124 to 130 each bind ATP; these read GLR and NAFISSS.

Belongs to the bacterial CoaD family. In terms of assembly, homohexamer. Mg(2+) is required as a cofactor.

It localises to the cytoplasm. The catalysed reaction is (R)-4'-phosphopantetheine + ATP + H(+) = 3'-dephospho-CoA + diphosphate. It participates in cofactor biosynthesis; coenzyme A biosynthesis; CoA from (R)-pantothenate: step 4/5. In terms of biological role, reversibly transfers an adenylyl group from ATP to 4'-phosphopantetheine, yielding dephospho-CoA (dPCoA) and pyrophosphate. The protein is Phosphopantetheine adenylyltransferase of Campylobacter fetus subsp. fetus (strain 82-40).